The primary structure comprises 70 residues: Homeobox protein OTX2 (70 aa).

The tract at residues 34-70 (HQLPGPGATLSPMGTNAVTSHLNQSPASLSTQGYGAS) is disordered. The span at 45 to 70 (PMGTNAVTSHLNQSPASLSTQGYGAS) shows a compositional bias: polar residues.

Belongs to the paired homeobox family. Bicoid subfamily.

The protein resides in the nucleus. Transcription factor probably involved in the development of the brain and the sense organs. Can bind to the bicoid/BCD target sequence (BTS): 5'-TCTAATCCC-3'. This Rattus norvegicus (Rat) protein is Homeobox protein OTX2 (Otx2).